We begin with the raw amino-acid sequence, 272 residues long: Shikimate dehydrogenase (NADP(+)) (272 aa).

Shikimate is bound by residues 14–16 and threonine 61; that span reads SKS. Lysine 65 serves as the catalytic Proton acceptor. Glutamate 77 contacts NADP(+). Residues asparagine 86 and aspartate 102 each contribute to the shikimate site. NADP(+) contacts are provided by residues 126 to 130, 149 to 154, and methionine 213; these read GAGGA and NRTVSR. Residue tyrosine 215 coordinates shikimate. Glycine 237 is a binding site for NADP(+).

The protein belongs to the shikimate dehydrogenase family. In terms of assembly, homodimer.

The enzyme catalyses shikimate + NADP(+) = 3-dehydroshikimate + NADPH + H(+). The protein operates within metabolic intermediate biosynthesis; chorismate biosynthesis; chorismate from D-erythrose 4-phosphate and phosphoenolpyruvate: step 4/7. Involved in the biosynthesis of the chorismate, which leads to the biosynthesis of aromatic amino acids. Catalyzes the reversible NADPH linked reduction of 3-dehydroshikimate (DHSA) to yield shikimate (SA). The chain is Shikimate dehydrogenase (NADP(+)) from Shigella boydii serotype 18 (strain CDC 3083-94 / BS512).